The following is a 519-amino-acid chain: Dolichol kinase (519 aa).

Residues 1-47 are Cytoplasmic-facing; sequence MVAIIPHASFTTIKLTQKTEGSQMPTEEICKINMRTRKFDVGGNSRD. A helical transmembrane segment spans residues 48 to 68; that stretch reads FECFYSNFVQTVILLGTFFYC. Topologically, residues 69–88 are lumenal; that stretch reads VERLQPWSIVTADISYKQIF. A helical membrane pass occupies residues 89–109; sequence VNVFVVCLIMVGLIFTKYWQH. Residues 110-118 are Cytoplasmic-facing; it reads GYKSLPKFD. The chain crosses the membrane as a helical span at residues 119 to 139; that stretch reads TIYSLYLPFMVSLLFDTSSTV. Residues 140–151 are Lumenal-facing; sequence INTILILSVLNS. The helical transmembrane segment at 152 to 172 threads the bilayer; sequence YRWRTQLVVIILQLCLIFFNF. At 173–181 the chain is on the cytoplasmic side; sequence EAGDRLKNI. Residues 182–203 form a helical membrane-spanning segment; the sequence is ISIVINSLLSLILKYIGQLKSL. At 204-223 the chain is on the lumenal side; it reads DNIDSNLFSILLTNILYVSE. A helical membrane pass occupies residues 224–244; it reads AGTVHFRILKGIILALTTIIS. Topologically, residues 245-253 are cytoplasmic; it reads INYVLKKVM. The helical transmembrane segment at 254 to 274 threads the bilayer; the sequence is HFKPFMLSISFAIGLPLFANT. Over 275–294 the chain is Lumenal; the sequence is FIHLEDGENPLLWLVKYILE. A helical transmembrane segment spans residues 295–315; sequence STIRQKILFAWSSILILSIPS. The Cytoplasmic segment spans residues 316–326; the sequence is ILIEKDSLSLN. A helical transmembrane segment spans residues 327–347; it reads TSRKLWHFIIFLLIIPSFQMD. The Lumenal portion of the chain corresponds to 348–349; it reads SN. Residues 350–370 traverse the membrane as a helical segment; sequence FVKIALSGTIPVFLSIEYIRF. Topologically, residues 371 to 394 are cytoplasmic; sequence QNLPPLGSAIELQLRRFADDRDHS. The helical transmembrane segment at 395 to 415 threads the bilayer; it reads GPLIISYLYLLFGISTPLLMN. Residues 416–417 are Lumenal-facing; the sequence is NS. A helical membrane pass occupies residues 418-438; the sequence is PMGLIGLGIGDSLASIIGKRY. At 439–449 the chain is on the cytoplasmic side; the sequence is GRIRWKGTQKT. The chain crosses the membrane as a helical span at residues 450 to 470; it reads LEGTLAFIVTSFIVCLVLLRF. Over 471-472 the chain is Lumenal; that stretch reads DK. The chain crosses the membrane as a helical span at residues 473–493; the sequence is AAIFNHLTTLQLLTLCTLSGV. The Cytoplasmic segment spans residues 494–519; it reads LEGNSVLNDNILIPAFMMICEKLITL.

Belongs to the polyprenol kinase family.

It is found in the endoplasmic reticulum membrane. It catalyses the reaction a di-trans,poly-cis-dolichol + CTP = a di-trans,poly-cis-dolichyl phosphate + CDP + H(+). The protein operates within protein modification; protein glycosylation. In terms of biological role, catalyzes CTP-mediated phosphorylation of dolichol, the terminal step in de novo dolichyl monophosphate (Dol-P) biosynthesis. Dol-P is a lipid carrier essential for the synthesis of N-linked and O-linked oligosaccharides and for GPI anchors. This Saccharomyces cerevisiae (strain ATCC 204508 / S288c) (Baker's yeast) protein is Dolichol kinase (SEC59).